The chain runs to 463 residues: Major capsid protein (463 aa).

The protein belongs to the NCLDV major capsid protein family. As to quaternary structure, homotrimer.

It localises to the virion. Its function is as follows. Major capsid protein that self assembles to form an icosahedral capsid. Represents around 50% of the total virion protein mass. The chain is Major capsid protein (MCP) from Rana tigrina ranavirus.